The following is a 34-amino-acid chain: U10-ctenitoxin-Pr1a (34 aa).

Disulfide bonds link C2–C15, C9–C20, C14–C31, and C22–C29.

Expressed by the venom gland.

It localises to the secreted. Its function is as follows. Non-toxic to mice and insects. This chain is U10-ctenitoxin-Pr1a, found in Phoneutria reidyi (Brazilian Amazonian armed spider).